A 249-amino-acid polypeptide reads, in one-letter code: 1-(5-phosphoribosyl)-5-[(5-phosphoribosylamino)methylideneamino] imidazole-4-carboxamide isomerase (249 aa).

Asp10 acts as the Proton acceptor in catalysis. Residue Asp136 is the Proton donor of the active site.

Belongs to the HisA/HisF family.

It localises to the cytoplasm. The enzyme catalyses 1-(5-phospho-beta-D-ribosyl)-5-[(5-phospho-beta-D-ribosylamino)methylideneamino]imidazole-4-carboxamide = 5-[(5-phospho-1-deoxy-D-ribulos-1-ylimino)methylamino]-1-(5-phospho-beta-D-ribosyl)imidazole-4-carboxamide. It functions in the pathway amino-acid biosynthesis; L-histidine biosynthesis; L-histidine from 5-phospho-alpha-D-ribose 1-diphosphate: step 4/9. This chain is 1-(5-phosphoribosyl)-5-[(5-phosphoribosylamino)methylideneamino] imidazole-4-carboxamide isomerase, found in Symbiobacterium thermophilum (strain DSM 24528 / JCM 14929 / IAM 14863 / T).